A 495-amino-acid polypeptide reads, in one-letter code: Siroheme synthase 2 (495 aa).

A precorrin-2 dehydrogenase /sirohydrochlorin ferrochelatase region spans residues 1–205 (MDHYPIFLNL…GREREAEQAM (205 aa)). NAD(+) contacts are provided by residues 22–23 (ET) and 43–44 (PD). Ser-130 bears the Phosphoserine mark. The tract at residues 220–495 (GEVYLVGAGP…HPAPADTEQA (276 aa)) is uroporphyrinogen-III C-methyltransferase. Pro-229 is an S-adenosyl-L-methionine binding site. Asp-252 serves as the catalytic Proton acceptor. Lys-274 serves as the catalytic Proton donor. Residues 305 to 307 (GGD), Ile-310, 335 to 336 (TA), Met-387, and Ala-416 contribute to the S-adenosyl-L-methionine site. The disordered stretch occupies residues 471–495 (FPEHGCLRGEPRPTRHPAPADTEQA).

In the N-terminal section; belongs to the precorrin-2 dehydrogenase / sirohydrochlorin ferrochelatase family. The protein in the C-terminal section; belongs to the precorrin methyltransferase family.

It catalyses the reaction uroporphyrinogen III + 2 S-adenosyl-L-methionine = precorrin-2 + 2 S-adenosyl-L-homocysteine + H(+). The enzyme catalyses precorrin-2 + NAD(+) = sirohydrochlorin + NADH + 2 H(+). It carries out the reaction siroheme + 2 H(+) = sirohydrochlorin + Fe(2+). Its pathway is cofactor biosynthesis; adenosylcobalamin biosynthesis; precorrin-2 from uroporphyrinogen III: step 1/1. It functions in the pathway cofactor biosynthesis; adenosylcobalamin biosynthesis; sirohydrochlorin from precorrin-2: step 1/1. The protein operates within porphyrin-containing compound metabolism; siroheme biosynthesis; precorrin-2 from uroporphyrinogen III: step 1/1. It participates in porphyrin-containing compound metabolism; siroheme biosynthesis; siroheme from sirohydrochlorin: step 1/1. Its pathway is porphyrin-containing compound metabolism; siroheme biosynthesis; sirohydrochlorin from precorrin-2: step 1/1. Functionally, multifunctional enzyme that catalyzes the SAM-dependent methylations of uroporphyrinogen III at position C-2 and C-7 to form precorrin-2 via precorrin-1. Then it catalyzes the NAD-dependent ring dehydrogenation of precorrin-2 to yield sirohydrochlorin. Finally, it catalyzes the ferrochelation of sirohydrochlorin to yield siroheme. The chain is Siroheme synthase 2 from Halorhodospira halophila (strain DSM 244 / SL1) (Ectothiorhodospira halophila (strain DSM 244 / SL1)).